Reading from the N-terminus, the 332-residue chain is Ribose-phosphate pyrophosphokinase (332 aa).

An ATP-binding site is contributed by 57–59 (DGE). Residues His-150 and Asp-189 each contribute to the Mg(2+) site. The active site involves Lys-213. D-ribose 5-phosphate contacts are provided by residues Arg-215, Asp-239, and 243–247 (DTAGT).

Belongs to the ribose-phosphate pyrophosphokinase family. Class I subfamily. As to quaternary structure, homohexamer. It depends on Mg(2+) as a cofactor.

The protein localises to the cytoplasm. It catalyses the reaction D-ribose 5-phosphate + ATP = 5-phospho-alpha-D-ribose 1-diphosphate + AMP + H(+). It functions in the pathway metabolic intermediate biosynthesis; 5-phospho-alpha-D-ribose 1-diphosphate biosynthesis; 5-phospho-alpha-D-ribose 1-diphosphate from D-ribose 5-phosphate (route I): step 1/1. Functionally, involved in the biosynthesis of the central metabolite phospho-alpha-D-ribosyl-1-pyrophosphate (PRPP) via the transfer of pyrophosphoryl group from ATP to 1-hydroxyl of ribose-5-phosphate (Rib-5-P). The chain is Ribose-phosphate pyrophosphokinase from Gloeobacter violaceus (strain ATCC 29082 / PCC 7421).